The sequence spans 308 residues: 3'(2'),5'-bisphosphate nucleotidase 1 (308 aa).

An N-acetylalanine modification is found at alanine 2. The active-site Proton acceptor is the aspartate 51. Mg(2+) is bound by residues glutamate 74, aspartate 117, valine 119, and aspartate 120. Catalysis depends on threonine 122, which acts as the Proton acceptor. Position 122 is a phosphothreonine (threonine 122). Threonine 195, histidine 198, glycine 220, and lysine 224 together coordinate AMP. Residue serine 240 is modified to Phosphoserine. N6-succinyllysine is present on lysine 244. Residue aspartate 247 participates in Mg(2+) binding.

This sequence belongs to the inositol monophosphatase superfamily. Mg(2+) is required as a cofactor. As to expression, highly expressed in heart, brain, spleen, lung, liver, skeletal muscle, kidney and testis.

The enzyme catalyses adenosine 3',5'-bisphosphate + H2O = AMP + phosphate. It catalyses the reaction adenosine 2',5'-bisphosphate + H2O = AMP + phosphate. It carries out the reaction 3'-phosphoadenylyl sulfate + H2O = adenosine 5'-phosphosulfate + phosphate. The catalysed reaction is 1D-myo-inositol 1,4-bisphosphate + H2O = 1D-myo-inositol 4-phosphate + phosphate. The enzyme catalyses 1D-myo-inositol 1,3,4-trisphosphate + H2O = 1D-myo-inositol 3,4-bisphosphate + phosphate. Its activity is regulated as follows. Inhibited by Li(+) and Ca(2+), but not by Na(+). Its function is as follows. Phosphatase that converts 3'(2')-phosphoadenosine 5'-phosphate (PAP) to AMP and adenosine 3'-phosphate 5'-phosphosulfate (PAPS) to adenosine 5'-phosphosulfate (APS). Is also able to hydrolyze inositol 1,4-bisphosphate (Ins(1,4)P2) and inositol 1,3,4-trisphosphate (Ins(1,3,4)P3), but is not active on AMP, 3'-AMP, fructose-1,6-bisphosphate, Ins(1)P, Ins(2)P and Ins(1,4,5)P3. Probably prevents the toxic accumulation of PAP, a compound which inhibits a variety of proteins, including PAPS-utilizing enzymes such as sulfotransferases, and RNA processing enzymes. Could also play a role in inositol recycling and phosphoinositide metabolism. This is 3'(2'),5'-bisphosphate nucleotidase 1 (Bpnt1) from Rattus norvegicus (Rat).